A 1228-amino-acid chain; its full sequence is Membrane-anchored lipid-binding protein LAM1 (1228 aa).

At 1 to 1062 (MHEHKAELRL…IFKCFSKVNK (1062 aa)) the chain is on the cytoplasmic side. The PH domain occupies 308–421 (EKGLSGWLYM…WINTLTSHKR (114 aa)). In terms of domain architecture, VASt spans 773–978 (EAWCYFQDNF…KTREYLKKFN (206 aa)). The chain crosses the membrane as a helical span at residues 1063-1083 (TLYYCLLISAVTNLFFVGKSI). The Lumenal portion of the chain corresponds to 1084 to 1228 (HSYFSVKSAE…EYNRLSAIPV (145 aa)). N-linked (GlcNAc...) asparagine glycosylation occurs at N1205.

This sequence belongs to the SIP3 family.

Its subcellular location is the mitochondrion membrane. It is found in the endoplasmic reticulum membrane. Functionally, involved in mitochondrial fragmentation during programmed cell death in response to high levels of alpha-factor mating pheromone or the drug amiodarone. May be involved in sterol transfer between intracellular membranes. The protein is Membrane-anchored lipid-binding protein LAM1 of Saccharomyces cerevisiae (strain ATCC 204508 / S288c) (Baker's yeast).